The sequence spans 565 residues: Adenine deaminase (565 aa).

The protein belongs to the metallo-dependent hydrolases superfamily. Adenine deaminase family. It depends on Mn(2+) as a cofactor.

The enzyme catalyses adenine + H2O + H(+) = hypoxanthine + NH4(+). The chain is Adenine deaminase from Cereibacter sphaeroides (strain ATCC 17023 / DSM 158 / JCM 6121 / CCUG 31486 / LMG 2827 / NBRC 12203 / NCIMB 8253 / ATH 2.4.1.) (Rhodobacter sphaeroides).